We begin with the raw amino-acid sequence, 1101 residues long: Endoglucanase C (1101 aa).

An N-terminal signal peptide occupies residues 1-32; sequence MVSRRSSQARGALTAVVATLALALAGSGTALA. CBM-cenC domains lie at 64–173 and 212–318; these read LCVA…TFCL and MCVD…EFCI. Residues 329-880 form a catalytic region; sequence PPPGYEPDTG…PDGCAPSACY (552 aa). Asp-506 (nucleophile) is an active-site residue. Residue His-831 is part of the active site. Positions 838-865 are disordered; the sequence is QLDPSLPSPPPGSLAGGPNSQAATWDPT. Active-site residues include Asp-882 and Glu-891. Ig-like domains are found at residues 918 to 1006 and 1008 to 1097; these read TAPV…LTVE and AAPV…LAVQ.

It belongs to the glycosyl hydrolase 9 (cellulase E) family.

It catalyses the reaction Endohydrolysis of (1-&gt;4)-beta-D-glucosidic linkages in cellulose, lichenin and cereal beta-D-glucans.. The biological conversion of cellulose to glucose generally requires three types of hydrolytic enzymes: (1) Endoglucanases which cut internal beta-1,4-glucosidic bonds; (2) Exocellobiohydrolases that cut the disaccharide cellobiose from the non-reducing end of the cellulose polymer chain; (3) Beta-1,4-glucosidases which hydrolyze the cellobiose and other short cello-oligosaccharides to glucose. The polypeptide is Endoglucanase C (cenC) (Cellulomonas fimi (strain ATCC 484 / DSM 20113 / JCM 1341 / CCUG 24087 / LMG 16345 / NBRC 15513 / NCIMB 8980 / NCTC 7547 / NRS-133)).